The chain runs to 764 residues: Probable cyclic nucleotide-gated ion channel 20, chloroplastic (764 aa).

The N-terminal 25 residues, 1-25, are a transit peptide targeting the chloroplast; sequence MASHNENDDIPMLPISDPSSRTRAR. A disordered region spans residues 1–40; it reads MASHNENDDIPMLPISDPSSRTRARAFTSRSRSVSLSNPT. Residues 19-33 show a composition bias toward low complexity; the sequence is SSRTRARAFTSRSRS. The Stromal segment spans residues 26-204; that stretch reads AFTSRSRSVS…PHAKEVQTWT (179 aa). A helical transmembrane segment spans residues 205 to 225; that stretch reads KFFALSCLLAIFIDPLFFFLI. Topologically, residues 226 to 242 are lumenal; that stretch reads KVQEQNKCIMIDWPMTK. A helical membrane pass occupies residues 243-263; that stretch reads AFVAVRSVTDVIFTMNILLQF. Residues 264–295 are Stromal-facing; that stretch reads RLAYVARESTVVGAGQLVSHPKKIALHYLKGK. A helical membrane pass occupies residues 296–316; it reads FFLDLFIVMPLPQILILWIIP. The Lumenal segment spans residues 317–329; the sequence is AHLGASGANYAKN. A helical transmembrane segment spans residues 330-350; the sequence is LLRAAVLFQYIPKLYRLLPFL. At 351-366 the chain is on the stromal side; that stretch reads AGQTPTGFIFESAWAN. The helical transmembrane segment at 367 to 387 threads the bilayer; sequence FVINLLTFMLAGHVVGSCWYL. Topologically, residues 388–488 are lumenal; the sequence is FGLQRVNQCL…GNQVPSYFLG (101 aa). Residues 489–509 form a helical membrane-spanning segment; sequence EVFFTMGIIGLGLLLFALLIG. The Stromal segment spans residues 510-764; sequence NMQNFLQALG…LCTPQSSYSL (255 aa). A nucleoside 3',5'-cyclic phosphate is bound by residues 593 to 710 and E658; that span reads IFSL…EDVT. The interval 713 to 729 is calmodulin-binding; the sequence is FSRFLRSHRVQGAIRYD. Residues 734-763 form the IQ domain; that stretch reads RLRAARQIQVAWRYRRRRLHRLCTPQSSYS.

This sequence belongs to the cyclic nucleotide-gated cation channel (TC 1.A.1.5) family. Homotetramer or heterotetramer.

It is found in the plastid. The protein localises to the chloroplast thylakoid membrane. Probable cyclic nucleotide-gated ion channel. The chain is Probable cyclic nucleotide-gated ion channel 20, chloroplastic (CNGC20) from Arabidopsis thaliana (Mouse-ear cress).